We begin with the raw amino-acid sequence, 451 residues long: Chromosomal replication initiator protein DnaA (451 aa).

The segment at Met1–Tyr71 is domain I, interacts with DnaA modulators. The tract at residues Tyr71–Glu112 is domain II. Positions Gln113–Ser329 are domain III, AAA+ region. Gly157, Gly159, Lys160, and Thr161 together coordinate ATP. Residues Lys330 to Gln451 are domain IV, binds dsDNA.

The protein belongs to the DnaA family. As to quaternary structure, oligomerizes as a right-handed, spiral filament on DNA at oriC.

The protein localises to the cytoplasm. In terms of biological role, plays an essential role in the initiation and regulation of chromosomal replication. ATP-DnaA binds to the origin of replication (oriC) to initiate formation of the DNA replication initiation complex once per cell cycle. Binds the DnaA box (a 9 base pair repeat at the origin) and separates the double-stranded (ds)DNA. Forms a right-handed helical filament on oriC DNA; dsDNA binds to the exterior of the filament while single-stranded (ss)DNA is stabiized in the filament's interior. The ATP-DnaA-oriC complex binds and stabilizes one strand of the AT-rich DNA unwinding element (DUE), permitting loading of DNA polymerase. After initiation quickly degrades to an ADP-DnaA complex that is not apt for DNA replication. Binds acidic phospholipids. The chain is Chromosomal replication initiator protein DnaA from Staphylococcus epidermidis (strain ATCC 35984 / DSM 28319 / BCRC 17069 / CCUG 31568 / BM 3577 / RP62A).